We begin with the raw amino-acid sequence, 306 residues long: Probable zinc metalloprotease VDBG_06923 (306 aa).

An N-terminal signal peptide occupies residues 1 to 28 (MNYEAEQPGANDDASGVAVALELARVLA). Residues Asp12 and Glu45 each coordinate Zn(2+). Asn60 is a glycosylation site (N-linked (GlcNAc...) asparagine). Asp72 provides a ligand contact to Zn(2+). A Fibronectin type-III domain is found at 218-306 (APAKVNNVRV…KSPVTIPFPT (89 aa)). N-linked (GlcNAc...) asparagine glycosylation is found at Asn228, Asn234, and Asn244.

This sequence belongs to the peptidase M28 family. M28B subfamily. Zn(2+) serves as cofactor.

The protein localises to the secreted. The polypeptide is Probable zinc metalloprotease VDBG_06923 (Verticillium alfalfae (strain VaMs.102 / ATCC MYA-4576 / FGSC 10136) (Verticillium wilt of alfalfa)).